We begin with the raw amino-acid sequence, 91 residues long: Putative defensin-like protein 83 (91 aa).

The first 27 residues, 1-27 (MATNKFLSILLLSLMAFAAILLPMISG), serve as a signal peptide directing secretion. Disulfide bonds link Cys32/Cys71, Cys37/Cys57, Cys43/Cys69, and Cys47/Cys70.

This sequence belongs to the DEFL family.

It is found in the secreted. In Arabidopsis thaliana (Mouse-ear cress), this protein is Putative defensin-like protein 83 (LCR46).